A 505-amino-acid polypeptide reads, in one-letter code: Glycerol kinase (505 aa).

Thr14 contributes to the ADP binding site. 3 residues coordinate ATP: Thr14, Thr15, and Ser16. Residue Thr14 coordinates sn-glycerol 3-phosphate. Arg18 serves as a coordination point for ADP. The sn-glycerol 3-phosphate site is built by Arg84, Glu85, Tyr136, and Asp246. The glycerol site is built by Arg84, Glu85, Tyr136, Asp246, and Gln247. ADP contacts are provided by Thr268 and Gly311. Thr268, Gly311, Gln315, and Gly412 together coordinate ATP. Gly412 and Asn416 together coordinate ADP.

It belongs to the FGGY kinase family.

It carries out the reaction glycerol + ATP = sn-glycerol 3-phosphate + ADP + H(+). It participates in polyol metabolism; glycerol degradation via glycerol kinase pathway; sn-glycerol 3-phosphate from glycerol: step 1/1. Its activity is regulated as follows. Inhibited by fructose 1,6-bisphosphate (FBP). In terms of biological role, key enzyme in the regulation of glycerol uptake and metabolism. Catalyzes the phosphorylation of glycerol to yield sn-glycerol 3-phosphate. The chain is Glycerol kinase from Vibrio cholerae serotype O1 (strain ATCC 39315 / El Tor Inaba N16961).